A 471-amino-acid polypeptide reads, in one-letter code: Cell division protein FtsP (471 aa).

A signal peptide (tat-type signal) is located at residues 1 to 27 (MSLSRRSFLQASGVALAAGALPLKAEA). A Plastocyanin-like domain is found at 229 to 288 (VRLRLLNASNARRYELSMTDNRAFHVVASDLGFLPAPMTVKRLSLGPGERREVLVDMSQG).

It belongs to the FtsP family. Post-translationally, predicted to be exported by the Tat system. The position of the signal peptide cleavage has not been experimentally proven.

Its subcellular location is the periplasm. In terms of biological role, cell division protein that is required for growth during stress conditions. May be involved in protecting or stabilizing the divisomal assembly under conditions of stress. The protein is Cell division protein FtsP of Rahnella sp. (strain Y9602).